A 324-amino-acid polypeptide reads, in one-letter code: Muscleblind-like protein (324 aa).

C3H1-type zinc fingers lie at residues 38-66 (WLQV…HPPP) and 72-100 (QGRV…HPPQ).

Belongs to the muscleblind family. As to expression, expressed in neurons around the pharynx.

Its subcellular location is the nucleus. In terms of biological role, binds to RNA with repeat sequences 5'-CUG-3' and 5'-CCUG-3'. This Caenorhabditis elegans protein is Muscleblind-like protein (mbl-1).